The primary structure comprises 441 residues: Interferon-related developmental regulator 2 (441 aa).

Over residues 1 to 15 the composition is skewed to basic residues; the sequence is MPRARKGNTPRKGGQ. The tract at residues 1 to 72 is disordered; it reads MPRARKGNTP…TVDEQGPQED (72 aa). Positions 63–72 are enriched in acidic residues; sequence TVDEQGPQED.

The protein belongs to the IFRD family. Associates with ribosomes; promoting ribosome inactivation.

Its function is as follows. Ribosome-binding protein that acts as an inhibitor of mRNA translation by promoting ribosome inactivation. Associates with the P- and E-sites of the ribosome and inserts a C-terminal helix into the mRNA exit channel to preclude translation. The chain is Interferon-related developmental regulator 2 from Oryctolagus cuniculus (Rabbit).